Here is a 199-residue protein sequence, read N- to C-terminus: Glycerol-3-phosphate acyltransferase (199 aa).

5 consecutive transmembrane segments (helical) span residues 5–25, 56–76, 83–103, 118–138, and 141–161; these read VLTI…SAVL, SAAL…YLAF, IALG…IFFG, APIG…LVLV, and YSSF…WWLD.

Belongs to the PlsY family. Probably interacts with PlsX.

The protein resides in the cell inner membrane. The catalysed reaction is an acyl phosphate + sn-glycerol 3-phosphate = a 1-acyl-sn-glycero-3-phosphate + phosphate. The protein operates within lipid metabolism; phospholipid metabolism. Catalyzes the transfer of an acyl group from acyl-phosphate (acyl-PO(4)) to glycerol-3-phosphate (G3P) to form lysophosphatidic acid (LPA). This enzyme utilizes acyl-phosphate as fatty acyl donor, but not acyl-CoA or acyl-ACP. This chain is Glycerol-3-phosphate acyltransferase, found in Shewanella halifaxensis (strain HAW-EB4).